A 155-amino-acid polypeptide reads, in one-letter code: Transcriptional repressor NrdR (155 aa).

A zinc finger spans residues 3–34; it reads CPFCNQTDTKVIDSRLVADGVQVRRRRECQAC. In terms of domain architecture, ATP-cone spans 49–139; that stretch reads PKVIKQDGTR…VYRSFQDISE (91 aa).

It belongs to the NrdR family. Zn(2+) is required as a cofactor.

In terms of biological role, negatively regulates transcription of bacterial ribonucleotide reductase nrd genes and operons by binding to NrdR-boxes. This is Transcriptional repressor NrdR from Teredinibacter turnerae (strain ATCC 39867 / T7901).